The chain runs to 159 residues: MKIRILTIGQKMPAWVLTGFEDYFKRIQPFVQTQVIELPMAKRGKNDSDADILKYCQIEGESILAALKPNEVLIALEVGGRELSTEKLADTMKSWMLEGHDIALAIGGPDGLSDQVRKAAAWHWSLSKLTMPHPMVRILLIEQLYRAMSINHNHPYHRA.

S-adenosyl-L-methionine contacts are provided by residues Leu76, Gly107, and Leu126–Met131.

This sequence belongs to the RNA methyltransferase RlmH family. As to quaternary structure, homodimer.

It is found in the cytoplasm. The enzyme catalyses pseudouridine(1915) in 23S rRNA + S-adenosyl-L-methionine = N(3)-methylpseudouridine(1915) in 23S rRNA + S-adenosyl-L-homocysteine + H(+). Specifically methylates the pseudouridine at position 1915 (m3Psi1915) in 23S rRNA. The sequence is that of Ribosomal RNA large subunit methyltransferase H from Acinetobacter baylyi (strain ATCC 33305 / BD413 / ADP1).